The chain runs to 385 residues: MHMPKGFLSFGINIGIKDDTKDFGVIYSEIPCKATAVFTKNNFPGAPVIVGKEHVRSGVLQAIVINSKNSNVATGEKGIQNSREICKIIGESLDIKETLVLPSSTGVIGVPLKMEIILPACKKAKSLLKPGNLEEVAEAIMTTDTRKKISSRNIKTKSGQGTIYGIAKGAGMIEPNMATMLCYILSDVSLPEGTDLYSILKSSVDQSFNCLTIDSDTSTSDTVALLCNGLSGESSVQDFSKALTEICIDLTKLIATDGEGATKLIELTISGAKSEAQARKIGKSILNSPLVKTAIYGGDPNWGRLIMAVGKVFDEPIPFEGLQIYFGTLPVKEANPETLKKLSEYLKNNTEISLNVVLNVGTISMKFWGCDFTEKYIEENAYYTT.

Residues T142, K168, T179, E259, N380, and T385 each coordinate substrate. Residue T179 is the Nucleophile of the active site.

This sequence belongs to the ArgJ family. In terms of assembly, heterotetramer of two alpha and two beta chains.

It is found in the cytoplasm. The enzyme catalyses N(2)-acetyl-L-ornithine + L-glutamate = N-acetyl-L-glutamate + L-ornithine. It carries out the reaction L-glutamate + acetyl-CoA = N-acetyl-L-glutamate + CoA + H(+). The protein operates within amino-acid biosynthesis; L-arginine biosynthesis; L-ornithine and N-acetyl-L-glutamate from L-glutamate and N(2)-acetyl-L-ornithine (cyclic): step 1/1. Its pathway is amino-acid biosynthesis; L-arginine biosynthesis; N(2)-acetyl-L-ornithine from L-glutamate: step 1/4. Its function is as follows. Catalyzes two activities which are involved in the cyclic version of arginine biosynthesis: the synthesis of N-acetylglutamate from glutamate and acetyl-CoA as the acetyl donor, and of ornithine by transacetylation between N(2)-acetylornithine and glutamate. This chain is Arginine biosynthesis bifunctional protein ArgJ, found in Leptospira interrogans serogroup Icterohaemorrhagiae serovar copenhageni (strain Fiocruz L1-130).